The chain runs to 84 residues: Cytochrome b559 subunit alpha (84 aa).

Residues 22–36 (IIHSITIPALFVAGW) form a helical membrane-spanning segment. H24 is a binding site for heme.

Belongs to the PsbE/PsbF family. In terms of assembly, heterodimer of an alpha subunit and a beta subunit. PSII is composed of 1 copy each of membrane proteins PsbA, PsbB, PsbC, PsbD, PsbE, PsbF, PsbH, PsbI, PsbJ, PsbK, PsbL, PsbM, PsbT, PsbX, PsbY, PsbZ, Psb30/Ycf12, at least 3 peripheral proteins of the oxygen-evolving complex and a large number of cofactors. It forms dimeric complexes. Heme b is required as a cofactor.

The protein localises to the plastid. It localises to the chloroplast thylakoid membrane. This b-type cytochrome is tightly associated with the reaction center of photosystem II (PSII). PSII is a light-driven water:plastoquinone oxidoreductase that uses light energy to abstract electrons from H(2)O, generating O(2) and a proton gradient subsequently used for ATP formation. It consists of a core antenna complex that captures photons, and an electron transfer chain that converts photonic excitation into a charge separation. The polypeptide is Cytochrome b559 subunit alpha (Guillardia theta (Cryptophyte)).